Consider the following 287-residue polypeptide: Cis-prenyltransferase 7, chloroplastic (287 aa).

A chloroplast-targeting transit peptide spans 1–34 (MLSLGFSLPPPSDNKLIITNNNQYNYRTNLANVC). Asp61 is a catalytic residue.

The protein belongs to the UPP synthase family. Requires Mg(2+) as cofactor. Expressed in leaf trichomes and stem trichomes.

It localises to the plastid. It is found in the chloroplast. In terms of biological role, uses geranylgeranyl diphosphate to catalyze the cis-prenyl chain elongation and produce polyprenyl diphosphate with a chain of 35 carbons. This is Cis-prenyltransferase 7, chloroplastic from Solanum lycopersicum (Tomato).